The primary structure comprises 508 residues: Chromosomal replication initiator protein DnaA (508 aa).

The segment at 1–90 (MSVELWQQCV…RRSSAPRAAP (90 aa)) is domain I, interacts with DnaA modulators. Residues 91-171 (NAPVSAAVAA…QVEGALKHTS (81 aa)) are domain II. Residues 130-160 (EVEEPSSRDSFDSMSDSGSVPAASGRTEQRT) form a disordered region. The tract at residues 172–388 (YLNRTFTFET…GALKRVIAHS (217 aa)) is domain III, AAA+ region. ATP contacts are provided by Gly-216, Gly-218, Lys-219, and Thr-220. Positions 389 to 508 (HFMGRDITIE…YKNLLRTLTT (120 aa)) are domain IV, binds dsDNA.

This sequence belongs to the DnaA family. In terms of assembly, oligomerizes as a right-handed, spiral filament on DNA at oriC.

The protein localises to the cytoplasm. Its function is as follows. Plays an essential role in the initiation and regulation of chromosomal replication. ATP-DnaA binds to the origin of replication (oriC) to initiate formation of the DNA replication initiation complex once per cell cycle. Binds the DnaA box (a 9 base pair repeat at the origin) and separates the double-stranded (ds)DNA. Forms a right-handed helical filament on oriC DNA; dsDNA binds to the exterior of the filament while single-stranded (ss)DNA is stabiized in the filament's interior. The ATP-DnaA-oriC complex binds and stabilizes one strand of the AT-rich DNA unwinding element (DUE), permitting loading of DNA polymerase. After initiation quickly degrades to an ADP-DnaA complex that is not apt for DNA replication. Binds acidic phospholipids. This is Chromosomal replication initiator protein DnaA from Pseudomonas entomophila (strain L48).